We begin with the raw amino-acid sequence, 196 residues long: dCTP deaminase (196 aa).

DCTP is bound by residues 113–118, Asp131, 139–141, Tyr174, Lys181, and Gln185; these read RSSLAR and VLE. Glu141 functions as the Proton donor/acceptor in the catalytic mechanism.

The protein belongs to the dCTP deaminase family. As to quaternary structure, homotrimer.

It catalyses the reaction dCTP + H2O + H(+) = dUTP + NH4(+). It participates in pyrimidine metabolism; dUMP biosynthesis; dUMP from dCTP (dUTP route): step 1/2. Catalyzes the deamination of dCTP to dUTP. The chain is dCTP deaminase from Wigglesworthia glossinidia brevipalpis.